The following is a 35-amino-acid chain: MEALVYTFLLISTLGIIFFAIFFREPPKVPTKGGK.

A helical transmembrane segment spans residues 3 to 23; it reads ALVYTFLLISTLGIIFFAIFF.

The protein belongs to the PsbT family. In terms of assembly, PSII is composed of 1 copy each of membrane proteins PsbA, PsbB, PsbC, PsbD, PsbE, PsbF, PsbH, PsbI, PsbJ, PsbK, PsbL, PsbM, PsbT, PsbY, PsbZ, Psb30/Ycf12, at least 3 peripheral proteins of the oxygen-evolving complex and a large number of cofactors. It forms dimeric complexes.

The protein resides in the plastid. It localises to the chloroplast thylakoid membrane. Functionally, found at the monomer-monomer interface of the photosystem II (PS II) dimer, plays a role in assembly and dimerization of PSII. PSII is a light-driven water plastoquinone oxidoreductase, using light energy to abstract electrons from H(2)O, generating a proton gradient subsequently used for ATP formation. The polypeptide is Photosystem II reaction center protein T (Welwitschia mirabilis (Tree tumbo)).